The primary structure comprises 102 residues: Peptide chaperone MftB (102 aa).

It belongs to the peptide chaperone MftB family.

Peptide chaperone involved in the biosynthesis of the enzyme cofactor mycofactocin (MFT). Binds MftA and MftC with high affinity, and is essential for MftC activity on MftA, likely via the formation of a ternary complex. Is required for the in vivo ethanol assimilation in M.smegmatis. This Mycolicibacterium smegmatis (strain ATCC 700084 / mc(2)155) (Mycobacterium smegmatis) protein is Peptide chaperone MftB.